The primary structure comprises 183 residues: MTATAQQLEFLKQNIKTIPDYPKPGILFRDVTSLLEKPDAYALSIELLAARYRAAGITKVVGTEARGFLFGAPVALALGVGFVPVRKPGKLPRATLAESYALEYGTDTLEIHQDAIDANDRVLMVDDLLATGGTIEATTRLIRRLGGVVHDAAFIIDLPALGGEARLEAMNINCYSLVSFDGH.

Belongs to the purine/pyrimidine phosphoribosyltransferase family. As to quaternary structure, homodimer.

It localises to the cytoplasm. It carries out the reaction AMP + diphosphate = 5-phospho-alpha-D-ribose 1-diphosphate + adenine. It participates in purine metabolism; AMP biosynthesis via salvage pathway; AMP from adenine: step 1/1. Catalyzes a salvage reaction resulting in the formation of AMP, that is energically less costly than de novo synthesis. The chain is Adenine phosphoribosyltransferase from Edwardsiella ictaluri (strain 93-146).